The sequence spans 201 residues: ATP-dependent Clp protease proteolytic subunit (201 aa).

Serine 97 (nucleophile) is an active-site residue. Histidine 122 is a catalytic residue.

The protein belongs to the peptidase S14 family. In terms of assembly, fourteen ClpP subunits assemble into 2 heptameric rings which stack back to back to give a disk-like structure with a central cavity, resembling the structure of eukaryotic proteasomes.

The protein localises to the cytoplasm. It catalyses the reaction Hydrolysis of proteins to small peptides in the presence of ATP and magnesium. alpha-casein is the usual test substrate. In the absence of ATP, only oligopeptides shorter than five residues are hydrolyzed (such as succinyl-Leu-Tyr-|-NHMec, and Leu-Tyr-Leu-|-Tyr-Trp, in which cleavage of the -Tyr-|-Leu- and -Tyr-|-Trp bonds also occurs).. In terms of biological role, cleaves peptides in various proteins in a process that requires ATP hydrolysis. Has a chymotrypsin-like activity. Plays a major role in the degradation of misfolded proteins. The protein is ATP-dependent Clp protease proteolytic subunit of Nitratidesulfovibrio vulgaris (strain ATCC 29579 / DSM 644 / CCUG 34227 / NCIMB 8303 / VKM B-1760 / Hildenborough) (Desulfovibrio vulgaris).